The primary structure comprises 947 residues: Protocadherin alpha-4 (947 aa).

Residues 1–29 (MEFSWGSGQESQRLLLSFLLLAIWEAGNS) form the signal peptide. 6 consecutive Cadherin domains span residues 30-133 (QIHY…PPRF), 134-242 (PTTQ…APVF), 243-350 (DRSL…VPEL), 351-455 (EFKS…APVF), 456-565 (AQPE…APTL), and 573-681 (SGGI…APSR). Residues 30 to 697 (QIHYSIPEEA…HSEASLVDVN (668 aa)) lie on the Extracellular side of the membrane. Cys-96 and Cys-102 are oxidised to a cystine. 2 N-linked (GlcNAc...) asparagine glycosylation sites follow: Asn-257 and Asn-265. Residue Thr-438 is glycosylated (O-linked (Man) threonine). O-linked (Man) serine glycosylation is found at Ser-440 and Ser-442. N-linked (GlcNAc...) asparagine glycosylation is present at Asn-548. A helical transmembrane segment spans residues 698-718 (VYLIIAICAVSSLLVLTLLLY). Residues 719–947 (TALRCSTVPS…GNSTTDNSDQ (229 aa)) lie on the Cytoplasmic side of the membrane. PXXP repeat units follow at residues 734–737 (PPKP), 774–777 (PSLS), 796–799 (PRQP), 829–832 (PGGP), 870–873 (PGNP), and 888–891 (PGSP). The tract at residues 734–891 (PPKPVMVCSS…PDKFIIPGSP (158 aa)) is 6 X 4 AA repeats of P-X-X-P. The segment at 738–947 (VMVCSSAVGS…GNSTTDNSDQ (210 aa)) is required for interaction with FYN. 2 disordered regions span residues 761–805 (GEYP…DWRY) and 824–853 (ILRA…EVSP). Residues 891–947 (PAIISIRQEPANNQIDKSDFITFGKKEETKKKKKKKKGNKTQEKKEKGNSTTDNSDQ) are disordered. Residues 906-920 (DKSDFITFGKKEETK) show a composition bias toward basic and acidic residues.

In terms of assembly, forms homodimers in trans (molecules expressed by two different cells). Forms promiscuous heterodimers in cis (at the plasma membrane of the same cell) with other protocadherins. Interacts with FYN. Detected in brain throughout embryonic development. Detected in adult brain, in particular in cerebellum and forebrain.

The protein resides in the cell membrane. Its function is as follows. Calcium-dependent cell-adhesion protein involved in cells self-recognition and non-self discrimination. Thereby, it is involved in the establishment and maintenance of specific neuronal connections in the brain. The polypeptide is Protocadherin alpha-4 (Mus musculus (Mouse)).